A 1338-amino-acid polypeptide reads, in one-letter code: Apoptotic chromatin condensation inducer in the nucleus (1338 aa).

A disordered region spans residues 1-57; that stretch reads MWGRKRPNSSGETRGILSGNRGVDYGSGRGQSGPFEGRWRKLPKMPEAVGTDPSTSR. One can recognise an SAP domain in the interval 72-106; the sequence is LQALRVTDLKAALEQRGLAKSGQKSALVKRLKGAL. Residues Ser-132, Ser-166, Ser-169, Ser-208, Ser-210, and Ser-216 each carry the phosphoserine modification. The disordered stretch occupies residues 155-866; the sequence is EAREAAELEE…ATQKKPSISI (712 aa). Acidic residues predominate over residues 161–171; it reads ELEEASAESED. Positions 219-228 are enriched in basic and acidic residues; it reads EKPRKGERRS. Ser-242 is modified (phosphoserine). A Phosphothreonine modification is found at Thr-253. A Glycyl lysine isopeptide (Lys-Gly) (interchain with G-Cter in SUMO1) cross-link involves residue Lys-267. Positions 269 to 290 are enriched in acidic residues; it reads EEEEEEEEEEEDDDDEEEEEVD. Phosphoserine is present on Ser-295. Basic and acidic residues predominate over residues 313-353; it reads ERTRAKPEKVVDEKPLNIRSQEKGELEKGGRVTRSQEEARR. Lys-318 is covalently cross-linked (Glycyl lysine isopeptide (Lys-Gly) (interchain with G-Cter in SUMO2)). Residues Ser-332 and Ser-369 each carry the phosphoserine modification. Lys-378 is covalently cross-linked (Glycyl lysine isopeptide (Lys-Gly) (interchain with G-Cter in SUMO2)). Phosphoserine is present on residues Ser-387, Ser-389, Ser-391, and Ser-413. Residues Thr-417 and Thr-423 each carry the phosphothreonine modification. Residues 425-434 are compositionally biased toward polar residues; sequence EASSPPTHIQ. Ser-454, Ser-477, Ser-479, Ser-491, and Ser-497 each carry phosphoserine. The span at 506-518 shows a compositional bias: polar residues; it reads QKSSLPECSTQKG. The span at 542–559 shows a compositional bias: basic and acidic residues; sequence ITEEPMKKQSLEQKEGRR. The residue at position 561 (Ser-561) is a Phosphoserine. 2 stretches are compositionally biased toward low complexity: residues 573–603 and 646–662; these read SADS…ASRP and RSAS…GVSR. An N6,N6,N6-trimethyllysine; by EHMT2; alternate modification is found at Lys-654. Lys-654 is subject to N6,N6-dimethyllysine; by EHMT2; alternate. Residues Ser-655, Ser-657, Ser-710, and Ser-729 each carry the phosphoserine modification. A Glycyl lysine isopeptide (Lys-Gly) (interchain with G-Cter in SUMO2) cross-link involves residue Lys-732. A compositionally biased stretch (polar residues) spans 744–754; sequence TQPQTSETQIS. Composition is skewed to basic and acidic residues over residues 757-767 and 798-815; these read LESERTHHTVE and NDER…KESS. Phosphoserine is present on residues Ser-825 and Ser-838. The segment covering 855–866 has biased composition (polar residues); sequence TAATQKKPSISI. Position 861 is an N6-acetyllysine; alternate (Lys-861). Lys-861 participates in a covalent cross-link: Glycyl lysine isopeptide (Lys-Gly) (interchain with G-Cter in SUMO2); alternate. A Glycyl lysine isopeptide (Lys-Gly) (interchain with G-Cter in SUMO2) cross-link involves residue Lys-879. Positions 892–915 are enriched in basic and acidic residues; the sequence is ADDSRISEDETERNGDDGTHDKGL. The interval 892 to 950 is disordered; it reads ADDSRISEDETERNGDDGTHDKGLKICRTVTQVVPAEGQENGQREEEEEKEPEAELPAP. Phosphoserine is present on residues Ser-895 and Ser-898. Acidic residues predominate over residues 936–945; it reads EEEEEKEPEA. Lys-969 is covalently cross-linked (Glycyl lysine isopeptide (Lys-Gly) (interchain with G-Cter in SUMO2)). Thr-975 is subject to Phosphothreonine. Phosphoserine is present on residues Ser-986, Ser-989, and Ser-1003. Glycyl lysine isopeptide (Lys-Gly) (interchain with G-Cter in SUMO2) cross-links involve residues Lys-1046 and Lys-1106. Disordered stretches follow at residues 1104 to 1214 and 1226 to 1338; these read ETKA…DDLF and LPLT…GGRR. The segment covering 1115-1129 has biased composition (pro residues); sequence PLHPPPPPPVQPPPH. The span at 1130-1174 shows a compositional bias: basic and acidic residues; that stretch reads PRAEQREQERAVREQWAEREREMERRERTRSEREWDRDKVREGPR. The segment covering 1175 to 1192 has biased composition (basic residues); it reads SRSRSRDRRRKERAKSKE. Residue Ser-1179 is modified to Phosphoserine; by SRPK2 and PKB/AKT1. Basic and acidic residues-rich tracts occupy residues 1193-1214 and 1236-1317; these read KKSE…DDLF and KEAE…DRRD. The sufficient for interaction with RNPS1 and SAP18 and formation of the ASAP complex stretch occupies residues 1209-1236; the sequence is LLDDLFRKTKAAPCIYWLPLTESQIVQK.

As to quaternary structure, found in a mRNA splicing-dependent exon junction complex (EJC). Component of the heterotrimeric ASAP (apoptosis- and splicing-associated protein) complexes consisting of RNPS1, SAP18 and different isoforms of ACIN1; the association of SAP18 seems to require a preformed RNPS1:ACIN1 complex. Interacts with API5. Interacts with SRPK2 in a phosphorylation-dependent manner. Post-translationally, undergoes proteolytic cleavage; the processed form is active, contrary to the uncleaved form. In terms of processing, phosphorylation on Ser-1179 by SRPK2 up-regulates its stimulatory effect on cyclin A1.

It localises to the nucleus. Its subcellular location is the nucleus speckle. The protein localises to the nucleoplasm. Its function is as follows. Auxiliary component of the splicing-dependent multiprotein exon junction complex (EJC) deposited at splice junction on mRNAs. The EJC is a dynamic structure consisting of core proteins and several peripheral nuclear and cytoplasmic associated factors that join the complex only transiently either during EJC assembly or during subsequent mRNA metabolism. Component of the ASAP complexes which bind RNA in a sequence-independent manner and are proposed to be recruited to the EJC prior to or during the splicing process and to regulate specific excision of introns in specific transcription subsets; ACIN1 confers RNA-binding to the complex. The ASAP complex can inhibit RNA processing during in vitro splicing reactions. The ASAP complex promotes apoptosis and is disassembled after induction of apoptosis. Involved in the splicing modulation of BCL2L1/Bcl-X (and probably other apoptotic genes); specifically inhibits formation of proapoptotic isoforms such as Bcl-X(S); the activity is different from the established EJC assembly and function. Induces apoptotic chromatin condensation after activation by CASP3. Regulates cyclin A1, but not cyclin A2, expression in leukemia cells. In Mus musculus (Mouse), this protein is Apoptotic chromatin condensation inducer in the nucleus (Acin1).